A 329-amino-acid polypeptide reads, in one-letter code: Deoxynucleotidyltransferase terminal-interacting protein 1 (329 aa).

Residues 1-27 form a disordered region; that stretch reads MGATGDVEQPRGPGGAERGGPELGDAG. Residues 12 to 22 are compositionally biased toward gly residues; sequence GPGGAERGGPE. The tract at residues 56 to 147 is important for dimerization; the sequence is MTTSFTDPAI…RLTHELPGIK (92 aa). Positions 159 to 173 form a DNA-binding region, a.T hook; it reads RGSPIPKKRKGRPPG. Serine 161 carries the post-translational modification Phosphoserine. Positions 164 to 170 match the Nuclear localization signal motif; that stretch reads PKKRKGR. The segment at 197 to 316 is important for DNA and nucleosome binding; sequence REGPKWDPAR…MRKYMETLRT (120 aa). Residues 216-237 constitute a DNA-binding region (H-T-H motif); sequence GSRANKALGMGGTRGRIYIKHP.

Monomer and homodimer. A minor proportion may form homotrimers. Interacts with ZNF541. Interacts with the terminal deoxynucleotidyltransferase DNTT. Interacts with TRERF1. Identified in a histone deacetylase complex that contains DNTTIP1, HDAC1 and MIDEAS; this complex assembles into a tetramer that contains four copies of each protein chain. Component of a histone deacetylase complex containing DNTTIP1, ZNF541, HDAC1 and HDAC2. Identified in a complex with KCTD19, HDAC1, HDAC2 and ZNF541.

Its subcellular location is the nucleus. Increases DNTT terminal deoxynucleotidyltransferase activity (in vitro). Also acts as a transcriptional regulator, binding to the consensus sequence 5'-GNTGCATG-3' following an AT-tract. Associates with RAB20 promoter and positively regulates its transcription. Binds DNA and nucleosomes; may recruit HDAC1 complexes to nucleosomes or naked DNA. The polypeptide is Deoxynucleotidyltransferase terminal-interacting protein 1 (DNTTIP1) (Bos taurus (Bovine)).